The primary structure comprises 505 residues: Putative thymidine phosphorylase (505 aa).

This sequence belongs to the thymidine/pyrimidine-nucleoside phosphorylase family. Type 2 subfamily.

It carries out the reaction thymidine + phosphate = 2-deoxy-alpha-D-ribose 1-phosphate + thymine. The chain is Putative thymidine phosphorylase from Tolumonas auensis (strain DSM 9187 / NBRC 110442 / TA 4).